A 292-amino-acid polypeptide reads, in one-letter code: tRNA-cytidine(32) 2-sulfurtransferase (292 aa).

Positions 62–67 (SGGKDS) match the PP-loop motif motif. [4Fe-4S] cluster is bound by residues Cys-137, Cys-140, and Cys-228.

The protein belongs to the TtcA family. In terms of assembly, homodimer. The cofactor is Mg(2+). [4Fe-4S] cluster is required as a cofactor.

Its subcellular location is the cytoplasm. The enzyme catalyses cytidine(32) in tRNA + S-sulfanyl-L-cysteinyl-[cysteine desulfurase] + AH2 + ATP = 2-thiocytidine(32) in tRNA + L-cysteinyl-[cysteine desulfurase] + A + AMP + diphosphate + H(+). Its pathway is tRNA modification. Catalyzes the ATP-dependent 2-thiolation of cytidine in position 32 of tRNA, to form 2-thiocytidine (s(2)C32). The sulfur atoms are provided by the cysteine/cysteine desulfurase (IscS) system. This chain is tRNA-cytidine(32) 2-sulfurtransferase, found in Brucella anthropi (strain ATCC 49188 / DSM 6882 / CCUG 24695 / JCM 21032 / LMG 3331 / NBRC 15819 / NCTC 12168 / Alc 37) (Ochrobactrum anthropi).